The sequence spans 236 residues: Rab-like protein 3 (236 aa).

Residues 1–235 (MASLDRVKVL…GGGALKNFHC (235 aa)) form a small GTPase-like region. Residues 16-21 (GVGKSS), 148-150 (KLD), and 179-180 (DC) each bind GTP.

Belongs to the small GTPase superfamily. Rab family. Homodimer. Interacts with GPR89; the interaction stabilizes GPR89. Interacts with RAP1GDS1.

Its function is as follows. Required for KRAS signaling regulation and modulation of cell proliferation. Regulator of KRAS prenylation, and probably prenylation of other small GTPases. Required for lymphocyte development and function. Not required for myeloid cell development. The chain is Rab-like protein 3 (Rabl3) from Mus musculus (Mouse).